The following is a 222-amino-acid chain: Phosphoribosylformylglycinamidine synthase subunit PurQ (222 aa).

The Glutamine amidotransferase type-1 domain occupies 3–222 (AAVVVFPGSN…RALAGALTPA (220 aa)). The active-site Nucleophile is the Cys-86. Catalysis depends on residues His-194 and Glu-196.

As to quaternary structure, part of the FGAM synthase complex composed of 1 PurL, 1 PurQ and 2 PurS subunits.

It is found in the cytoplasm. It carries out the reaction N(2)-formyl-N(1)-(5-phospho-beta-D-ribosyl)glycinamide + L-glutamine + ATP + H2O = 2-formamido-N(1)-(5-O-phospho-beta-D-ribosyl)acetamidine + L-glutamate + ADP + phosphate + H(+). It catalyses the reaction L-glutamine + H2O = L-glutamate + NH4(+). It participates in purine metabolism; IMP biosynthesis via de novo pathway; 5-amino-1-(5-phospho-D-ribosyl)imidazole from N(2)-formyl-N(1)-(5-phospho-D-ribosyl)glycinamide: step 1/2. Part of the phosphoribosylformylglycinamidine synthase complex involved in the purines biosynthetic pathway. Catalyzes the ATP-dependent conversion of formylglycinamide ribonucleotide (FGAR) and glutamine to yield formylglycinamidine ribonucleotide (FGAM) and glutamate. The FGAM synthase complex is composed of three subunits. PurQ produces an ammonia molecule by converting glutamine to glutamate. PurL transfers the ammonia molecule to FGAR to form FGAM in an ATP-dependent manner. PurS interacts with PurQ and PurL and is thought to assist in the transfer of the ammonia molecule from PurQ to PurL. This Ruegeria pomeroyi (strain ATCC 700808 / DSM 15171 / DSS-3) (Silicibacter pomeroyi) protein is Phosphoribosylformylglycinamidine synthase subunit PurQ.